Here is a 674-residue protein sequence, read N- to C-terminus: Slender lobes-like protein (674 aa).

Disordered regions lie at residues 65–137, 168–321, and 352–382; these read LEKS…NASK, NELN…TIKK, and QKSR…RVEV. Residues 73-97 show a composition bias toward basic residues; it reads PKKKVQTKKHLPPVRKKDSVKRRRI. Over residues 127–137 the composition is skewed to polar residues; that stretch reads NQSNCSSNASK. Residues 216–228 are compositionally biased toward acidic residues; it reads VDSDDEEEQDQDQ. Basic and acidic residues predominate over residues 233-245; sequence KPAESENHSEIKK. At serine 248 the chain carries Phosphoserine. The span at 272–312 shows a compositional bias: basic and acidic residues; it reads EDPKEAGKNEESDKDKPAENGKSDKDKQAETEMSDEDKPSE. Phosphoserine occurs at positions 358 and 391. 2 disordered regions span residues 395-585 and 618-659; these read MVAE…AGYV and KYFR…NSAK. Over residues 400–410 the composition is skewed to basic residues; it reads KRQKNKRKRLS. Serine 414 carries the phosphoserine modification. Basic residues predominate over residues 548 to 558; it reads AKQKKKGKKKQ.

This Drosophila melanogaster (Fruit fly) protein is Slender lobes-like protein.